Here is a 393-residue protein sequence, read N- to C-terminus: Protein TsgA (393 aa).

A run of 12 helical transmembrane segments spans residues Trp-11 to Met-31, Phe-51 to Pro-71, Phe-78 to Leu-98, Ala-101 to Ile-121, Leu-134 to Phe-154, Trp-162 to Gly-182, Ile-206 to Ile-226, Ala-245 to Leu-265, Ile-273 to Gln-293, Trp-298 to Gly-318, Phe-332 to Val-352, and Leu-361 to Val-381.

The protein belongs to the major facilitator superfamily. TsgA family.

Its subcellular location is the cell inner membrane. In Salmonella paratyphi B (strain ATCC BAA-1250 / SPB7), this protein is Protein TsgA.